The following is an 85-amino-acid chain: Small ribosomal subunit protein uS17 (85 aa).

The protein belongs to the universal ribosomal protein uS17 family. As to quaternary structure, part of the 30S ribosomal subunit.

Functionally, one of the primary rRNA binding proteins, it binds specifically to the 5'-end of 16S ribosomal RNA. The polypeptide is Small ribosomal subunit protein uS17 (Ruminiclostridium cellulolyticum (strain ATCC 35319 / DSM 5812 / JCM 6584 / H10) (Clostridium cellulolyticum)).